A 226-amino-acid chain; its full sequence is Uridylate kinase (226 aa).

9–13 (KVSGK) provides a ligand contact to ATP. G46 is a UMP binding site. ATP-binding residues include G47 and R51. UMP contacts are provided by residues D68 and 116-122 (FQPGQST). ATP contacts are provided by T142, Y148, and D151.

This sequence belongs to the UMP kinase family. As to quaternary structure, homohexamer.

It is found in the cytoplasm. It catalyses the reaction UMP + ATP = UDP + ADP. Its pathway is pyrimidine metabolism; CTP biosynthesis via de novo pathway; UDP from UMP (UMPK route): step 1/1. With respect to regulation, inhibited by UTP. In terms of biological role, catalyzes the reversible phosphorylation of UMP to UDP. The protein is Uridylate kinase of Hyperthermus butylicus (strain DSM 5456 / JCM 9403 / PLM1-5).